Reading from the N-terminus, the 181-residue chain is ATP synthase subunit delta (181 aa).

The protein belongs to the ATPase delta chain family. F-type ATPases have 2 components, F(1) - the catalytic core - and F(0) - the membrane proton channel. F(1) has five subunits: alpha(3), beta(3), gamma(1), delta(1), epsilon(1). F(0) has three main subunits: a(1), b(2) and c(10-14). The alpha and beta chains form an alternating ring which encloses part of the gamma chain. F(1) is attached to F(0) by a central stalk formed by the gamma and epsilon chains, while a peripheral stalk is formed by the delta and b chains. The F(1)F(0) complex interacts with SpoIIIJ and YqjG; YqgA is found in the same complex. Interacts with FloT.

It localises to the cell membrane. Its subcellular location is the membrane raft. Functionally, f(1)F(0) ATP synthase produces ATP from ADP in the presence of a proton or sodium gradient. F-type ATPases consist of two structural domains, F(1) containing the extramembraneous catalytic core and F(0) containing the membrane proton channel, linked together by a central stalk and a peripheral stalk. During catalysis, ATP synthesis in the catalytic domain of F(1) is coupled via a rotary mechanism of the central stalk subunits to proton translocation. In terms of biological role, this protein is part of the stalk that links CF(0) to CF(1). It either transmits conformational changes from CF(0) to CF(1) or is implicated in proton conduction. This Bacillus subtilis (strain 168) protein is ATP synthase subunit delta.